A 208-amino-acid chain; its full sequence is EF-hand protein 5 variant 2 (208 aa).

The interval 1–35 (MQARGTVKVQGDANVDGKMSTGQHPHHQHLNSTQA) is disordered. EF-hand domains follow at residues 64–98 (MAEGFYVLSGGYKKLFIPSKDVYALMQNVGMHLTE), 99–134 (EEFHDALRVIGQSEPQNADELSFSDFLLLMTREVDD), 135–170 (TMADELRSAFFHYDKHKTGYVTRKQFTELFATLAER), and 171–206 (STPEELEELLAVAEVDETDDKIDYNRFVNELTSRVN). Residues glutamate 118, aspartate 123, aspartate 148, threonine 152, and tyrosine 154 each contribute to the Ca(2+) site.

The protein is EF-hand protein 5 variant 2 of Trypanosoma cruzi.